A 691-amino-acid chain; its full sequence is 1,4-alpha-glucan-branching enzyme (691 aa).

Residues Trp-80 and Lys-116 each contribute to the (1,4-alpha-D-glucosyl)n site. The active-site Nucleophile is the Asp-333. Glu-398 serves as the catalytic Proton donor.

Belongs to the glycosyl hydrolase 13 family. GlgB subfamily.

The protein localises to the cytoplasm. The catalysed reaction is Transfers a segment of a (1-&gt;4)-alpha-D-glucan chain to a primary hydroxy group in a similar glucan chain.. It functions in the pathway glycan biosynthesis; glycogen biosynthesis. Glycogen-branching enzyme participates in the glycogen biosynthetic process along with glycogenin and glycogen synthase. Generates alpha-1,6-glucosidic branches from alpha-1,4-linked glucose chains, to increase solubility of the glycogen polymer. In Yarrowia lipolytica (strain CLIB 122 / E 150) (Yeast), this protein is 1,4-alpha-glucan-branching enzyme (GLC3).